Reading from the N-terminus, the 455-residue chain is Phosphoglucosamine mutase (455 aa).

S107 functions as the Phosphoserine intermediate in the catalytic mechanism. Mg(2+) is bound by residues S107, D247, D249, and D251. Position 107 is a phosphoserine (S107).

Belongs to the phosphohexose mutase family. It depends on Mg(2+) as a cofactor. Post-translationally, activated by phosphorylation.

It carries out the reaction alpha-D-glucosamine 1-phosphate = D-glucosamine 6-phosphate. In terms of biological role, catalyzes the conversion of glucosamine-6-phosphate to glucosamine-1-phosphate. This chain is Phosphoglucosamine mutase, found in Leuconostoc citreum (strain KM20).